The chain runs to 133 residues: SGSCEMKTCWKSMPTFGDIGQVLKEKFDGATEVQSLKIGSRQQLVPTQRDFKPHTSSDLVYLVPSPDFCEEDLKVSIPVGLTFSHPPNQGSLGTHGRRCNKTSKAIDGCELMCCGRGFNTHIEEVIERCSCKF.

Residue S1 is the site of O-palmitoleoyl serine; by PORCN attachment. Disulfide bonds link C69–C114 and C99–C109. N-linked (GlcNAc...) asparagine glycosylation occurs at N100.

This sequence belongs to the Wnt family. In terms of processing, palmitoleoylation is required for efficient binding to frizzled receptors. Depalmitoleoylation leads to Wnt signaling pathway inhibition.

It localises to the secreted. The protein resides in the extracellular space. The protein localises to the extracellular matrix. Its function is as follows. Ligand for members of the frizzled family of seven transmembrane receptors. Plays an important role in embryonic development. The chain is Protein Wnt-4 (WNT-4) from Strongylocentrotus purpuratus (Purple sea urchin).